Consider the following 157-residue polypeptide: MTLRFDVAPPKKVHCLRVIGPYYQSVPDGFQKLMAWSQEQQLPWTETLAFYWDDPSETEQDQLRADVALVLPEGTAIGENTLGVREETVPGGLFAVLHTIVSNGEFAKAWNELYDLIAQNGYKPARGICFESYLCDGSSGNWEIEIWQSVDPNDGAQ.

The protein belongs to the DNA gyrase inhibitor family. In terms of assembly, interacts with DNA gyrase.

It is found in the cytoplasm. Inhibits the supercoiling activity of DNA gyrase. Acts by inhibiting DNA gyrase at an early step, prior to (or at the step of) binding of DNA by the gyrase. It protects cells against toxins that target DNA gyrase, by inhibiting activity of these toxins and reducing the formation of lethal double-strand breaks in the cell. This is DNA gyrase inhibitor 2 from Dickeya dadantii (strain 3937) (Erwinia chrysanthemi (strain 3937)).